Here is a 469-residue protein sequence, read N- to C-terminus: 3-isopropylmalate dehydratase large subunit (469 aa).

Positions 346, 406, and 409 each coordinate [4Fe-4S] cluster.

The protein belongs to the aconitase/IPM isomerase family. LeuC type 1 subfamily. In terms of assembly, heterodimer of LeuC and LeuD. [4Fe-4S] cluster serves as cofactor.

The enzyme catalyses (2R,3S)-3-isopropylmalate = (2S)-2-isopropylmalate. Its pathway is amino-acid biosynthesis; L-leucine biosynthesis; L-leucine from 3-methyl-2-oxobutanoate: step 2/4. Catalyzes the isomerization between 2-isopropylmalate and 3-isopropylmalate, via the formation of 2-isopropylmaleate. This Lysinibacillus sphaericus (strain C3-41) protein is 3-isopropylmalate dehydratase large subunit.